A 529-amino-acid chain; its full sequence is Probable anion transporter 1, chloroplastic (529 aa).

Residues 1–55 constitute a chloroplast transit peptide; the sequence is MLYLLPLSVSCRVPGSPPAPRSRRFLDPGGGRGVGDGLGGVRVFRRRALRGTDVR. Disordered regions lie at residues 13–39 and 52–78; these read VPGSPPAPRSRRFLDPGGGRGVGDGLG and TDVRSNTSSSSSRKGRHDDARHDGGYG. The segment covering 28 to 39 has biased composition (gly residues); the sequence is PGGGRGVGDGLG. The segment covering 67 to 76 has biased composition (basic and acidic residues); the sequence is RHDDARHDGG. The next 11 membrane-spanning stretches (helical) occupy residues 120-140, 158-178, 187-207, 209-229, 251-271, 274-294, 340-360, 378-398, 418-438, 469-489, and 503-523; these read WAIVFLCFSAFLLCNMDRVNM, VGLIQSSFFWGYLLTQIAGGI, TVLGFGVIWWSIATALTPFAA, LGLPFLLVTRAFMGVGEGVAM, LVYSGMYLGSVTGLAFSPLLI, FGWPSVFYSFGSLGVFWFSTW, VWALIVSHFCHNWGTFILLTW, LFCVLPWLTMAVSANFGGWIA, IGFLGPAFFLTQLSHIDSPAM, AGVLLGLSNTAGVLAGVFGTA, and VFKVSVVLYLVGTLVWNLFST.

The protein belongs to the major facilitator superfamily. Sodium/anion cotransporter (TC 2.A.1.14) family.

It is found in the plastid. Its subcellular location is the chloroplast membrane. In terms of biological role, probable anion transporter. This Oryza sativa subsp. japonica (Rice) protein is Probable anion transporter 1, chloroplastic (PHT4;1).